A 262-amino-acid chain; its full sequence is Pyridoxine 5'-phosphate synthase (262 aa).

Residue Asn-6 participates in 3-amino-2-oxopropyl phosphate binding. 1-deoxy-D-xylulose 5-phosphate is bound at residue 8-9 (DH). Position 17 (Arg-17) interacts with 3-amino-2-oxopropyl phosphate. His-41 functions as the Proton acceptor in the catalytic mechanism. Residues Arg-43 and His-48 each contribute to the 1-deoxy-D-xylulose 5-phosphate site. Catalysis depends on Glu-68, which acts as the Proton acceptor. Thr-98 is a binding site for 1-deoxy-D-xylulose 5-phosphate. The active-site Proton donor is His-210. 3-amino-2-oxopropyl phosphate is bound by residues Gly-211 and 232 to 233 (GQ).

Belongs to the PNP synthase family. In terms of assembly, homooctamer; tetramer of dimers.

It localises to the cytoplasm. It catalyses the reaction 3-amino-2-oxopropyl phosphate + 1-deoxy-D-xylulose 5-phosphate = pyridoxine 5'-phosphate + phosphate + 2 H2O + H(+). It functions in the pathway cofactor biosynthesis; pyridoxine 5'-phosphate biosynthesis; pyridoxine 5'-phosphate from D-erythrose 4-phosphate: step 5/5. Its function is as follows. Catalyzes the complicated ring closure reaction between the two acyclic compounds 1-deoxy-D-xylulose-5-phosphate (DXP) and 3-amino-2-oxopropyl phosphate (1-amino-acetone-3-phosphate or AAP) to form pyridoxine 5'-phosphate (PNP) and inorganic phosphate. The chain is Pyridoxine 5'-phosphate synthase from Campylobacter jejuni subsp. jejuni serotype O:23/36 (strain 81-176).